The following is a 199-amino-acid chain: ATP-dependent Clp protease proteolytic subunit (199 aa).

Serine 99 acts as the Nucleophile in catalysis. Residue histidine 124 is part of the active site.

This sequence belongs to the peptidase S14 family. Fourteen ClpP subunits assemble into 2 heptameric rings which stack back to back to give a disk-like structure with a central cavity, resembling the structure of eukaryotic proteasomes.

The protein localises to the cytoplasm. The catalysed reaction is Hydrolysis of proteins to small peptides in the presence of ATP and magnesium. alpha-casein is the usual test substrate. In the absence of ATP, only oligopeptides shorter than five residues are hydrolyzed (such as succinyl-Leu-Tyr-|-NHMec, and Leu-Tyr-Leu-|-Tyr-Trp, in which cleavage of the -Tyr-|-Leu- and -Tyr-|-Trp bonds also occurs).. Cleaves peptides in various proteins in a process that requires ATP hydrolysis. Has a chymotrypsin-like activity. Plays a major role in the degradation of misfolded proteins. The polypeptide is ATP-dependent Clp protease proteolytic subunit (Moorella thermoacetica (strain ATCC 39073 / JCM 9320)).